The chain runs to 383 residues: MESGNVSSSLFGNVSTALRPEARLSAETRLLGWNVPPEELRHIPEHWLTYPEPPESMNYLLGTLYIFFTLMSMLGNGLVIWVFSAAKSLRTPSNILVINLAFCDFMMMVKTPIFIYNSFHQGYALGHLGCQIFGIIGSYTGIAAGATNAFIAYDRFNVITRPMEGKMTHGKAIAMIIFIYMYATPWVVACYTETWGRFVPEGYLTSCTFDYLTDNFDTRLFVACIFFFSFVCPTTMITYYYSQIVGHVFSHEKALRDQAKKMNVESLRSNVDKNKETAEIRIAKAAITICFLFFCSWTPYGVMSLIGAFGDKTLLTPGATMIPACACKMVACIDPFVYAISHPRYRMELQKRCPWLALNEKAPESSAVASTSTTQEPQQTTAA.

The Extracellular segment spans residues 1–57 (MESGNVSSSLFGNVSTALRPEARLSAETRLLGWNVPPEELRHIPEHWLTYPEPPESM). An N-linked (GlcNAc...) asparagine glycan is attached at N13. A helical membrane pass occupies residues 58 to 82 (NYLLGTLYIFFTLMSMLGNGLVIWV). The Cytoplasmic portion of the chain corresponds to 83 to 94 (FSAAKSLRTPSN). Residues 95-119 (ILVINLAFCDFMMMVKTPIFIYNSF) traverse the membrane as a helical segment. Residues 120–133 (HQGYALGHLGCQIF) lie on the Extracellular side of the membrane. C130 and C207 are oxidised to a cystine. The chain crosses the membrane as a helical span at residues 134 to 153 (GIIGSYTGIAAGATNAFIAY). Residues 154–171 (DRFNVITRPMEGKMTHGK) are Cytoplasmic-facing. The chain crosses the membrane as a helical span at residues 172 to 196 (AIAMIIFIYMYATPWVVACYTETWG). Topologically, residues 197–220 (RFVPEGYLTSCTFDYLTDNFDTRL) are extracellular. The helical transmembrane segment at 221–248 (FVACIFFFSFVCPTTMITYYYSQIVGHV) threads the bilayer. At 249–284 (FSHEKALRDQAKKMNVESLRSNVDKNKETAEIRIAK) the chain is on the cytoplasmic side. The chain crosses the membrane as a helical span at residues 285-308 (AAITICFLFFCSWTPYGVMSLIGA). The Extracellular portion of the chain corresponds to 309–316 (FGDKTLLT). The helical transmembrane segment at 317–341 (PGATMIPACACKMVACIDPFVYAIS) threads the bilayer. An N6-(retinylidene)lysine modification is found at K328. Residues 342 to 383 (HPRYRMELQKRCPWLALNEKAPESSAVASTSTTQEPQQTTAA) lie on the Cytoplasmic side of the membrane. Residues 362–383 (APESSAVASTSTTQEPQQTTAA) are disordered. A compositionally biased stretch (low complexity) spans 369–383 (ASTSTTQEPQQTTAA).

It belongs to the G-protein coupled receptor 1 family. Opsin subfamily. In terms of processing, phosphorylated on some or all of the serine and threonine residues present in the C-terminal region.

It localises to the membrane. Its function is as follows. Visual pigments are the light-absorbing molecules that mediate vision. They consist of an apoprotein, opsin, covalently linked to cis-retinal. The chain is Opsin Rh3 (Rh3) from Drosophila melanogaster (Fruit fly).